The chain runs to 616 residues: Glutamine--fructose-6-phosphate aminotransferase [isomerizing] (616 aa).

The active-site Nucleophile; for GATase activity is Cys2. Positions 2–222 constitute a Glutamine amidotransferase type-2 domain; sequence CGIIGYSGPR…QERIVALSGD (221 aa). Residues 70-89 are disordered; it reads TGIGHTRWATHGEPSDRNAH. 2 consecutive SIS domains span residues 289 to 428 and 461 to 606; these read IRDD…LRGF and LAHW…VDRP. Lys611 serves as the catalytic For Fru-6P isomerization activity.

In terms of assembly, homodimer.

The protein resides in the cytoplasm. It catalyses the reaction D-fructose 6-phosphate + L-glutamine = D-glucosamine 6-phosphate + L-glutamate. In terms of biological role, catalyzes the first step in hexosamine metabolism, converting fructose-6P into glucosamine-6P using glutamine as a nitrogen source. The protein is Glutamine--fructose-6-phosphate aminotransferase [isomerizing] of Tropheryma whipplei (strain Twist) (Whipple's bacillus).